Consider the following 651-residue polypeptide: Threonine--tRNA ligase (651 aa).

The 61-residue stretch at 1–61 (MIKITFPDNS…NDDATVKLLK (61 aa)) folds into the TGS domain. Residues 242–541 (DHRKIGKEMD…LIEHTAGKFP (300 aa)) are catalytic. 3 residues coordinate Zn(2+): Cys-337, His-388, and His-518.

It belongs to the class-II aminoacyl-tRNA synthetase family. As to quaternary structure, homodimer. The cofactor is Zn(2+).

The protein resides in the cytoplasm. It catalyses the reaction tRNA(Thr) + L-threonine + ATP = L-threonyl-tRNA(Thr) + AMP + diphosphate + H(+). Its function is as follows. Catalyzes the attachment of threonine to tRNA(Thr) in a two-step reaction: L-threonine is first activated by ATP to form Thr-AMP and then transferred to the acceptor end of tRNA(Thr). Also edits incorrectly charged L-seryl-tRNA(Thr). The polypeptide is Threonine--tRNA ligase (Parabacteroides distasonis (strain ATCC 8503 / DSM 20701 / CIP 104284 / JCM 5825 / NCTC 11152)).